A 427-amino-acid polypeptide reads, in one-letter code: Trigger factor (427 aa).

Residues 160-240 (TDTVIGDVVK…VKEVKRLELP (81 aa)) form the PPIase FKBP-type domain.

It belongs to the FKBP-type PPIase family. Tig subfamily.

Its subcellular location is the cytoplasm. It catalyses the reaction [protein]-peptidylproline (omega=180) = [protein]-peptidylproline (omega=0). Functionally, involved in protein export. Acts as a chaperone by maintaining the newly synthesized protein in an open conformation. Functions as a peptidyl-prolyl cis-trans isomerase. In Chlorobium limicola (strain DSM 245 / NBRC 103803 / 6330), this protein is Trigger factor.